The sequence spans 173 residues: Nucleoside-triphosphatase THEP1 (173 aa).

ATP contacts are provided by residues 9-16 and 97-104; these read GPPGVGKT and LYVIDEVG.

It belongs to the THEP1 NTPase family.

It carries out the reaction a ribonucleoside 5'-triphosphate + H2O = a ribonucleoside 5'-diphosphate + phosphate + H(+). In terms of biological role, has nucleotide phosphatase activity towards ATP, GTP, CTP, TTP and UTP. May hydrolyze nucleoside diphosphates with lower efficiency. The protein is Nucleoside-triphosphatase THEP1 of Caldivirga maquilingensis (strain ATCC 700844 / DSM 13496 / JCM 10307 / IC-167).